The sequence spans 464 residues: Kynureninase (464 aa).

The residue at position 1 (methionine 1) is an N-acetylmethionine. Pyridoxal 5'-phosphate is bound by residues leucine 137, threonine 138, 165–168, serine 221, aspartate 250, histidine 253, and tyrosine 275; that span reads FPSD. Position 276 is an N6-(pyridoxal phosphate)lysine (lysine 276). Pyridoxal 5'-phosphate is bound by residues tryptophan 305 and asparagine 333.

This sequence belongs to the kynureninase family. Homodimer. It depends on pyridoxal 5'-phosphate as a cofactor. As to expression, high levels in liver and kidney. Also detected in heart, retina, ovary. Lung, testis and brain.

Its subcellular location is the cytoplasm. The protein localises to the cytosol. The enzyme catalyses L-kynurenine + H2O = anthranilate + L-alanine + H(+). It carries out the reaction 3-hydroxy-L-kynurenine + H2O = 3-hydroxyanthranilate + L-alanine + H(+). Its pathway is amino-acid degradation; L-kynurenine degradation; L-alanine and anthranilate from L-kynurenine: step 1/1. The protein operates within cofactor biosynthesis; NAD(+) biosynthesis; quinolinate from L-kynurenine: step 2/3. Its activity is regulated as follows. Inhibited by o-methylbenzoylalanine (OMBA). Functionally, catalyzes the cleavage of L-kynurenine (L-Kyn) and L-3-hydroxykynurenine (L-3OHKyn) into anthranilic acid (AA) and 3-hydroxyanthranilic acid (3-OHAA), respectively. Has a preference for the L-3-hydroxy form. Also has cysteine-conjugate-beta-lyase activity. The sequence is that of Kynureninase (Kynu) from Rattus norvegicus (Rat).